Here is a 72-residue protein sequence, read N- to C-terminus: Galensin (72 aa).

An N-terminal signal peptide occupies residues Met-1–Ala-22. A propeptide spanning residues Asp-23–Arg-48 is cleaved from the precursor. Phe-71 carries the phenylalanine amide modification.

It belongs to the frog skin active peptide (FSAP) family. Brevinin subfamily. In terms of assembly, homodimer; disulfide-linked. In terms of tissue distribution, expressed by the skin glands.

It is found in the secreted. Its function is as follows. Antibacterial activity against the Gram-positive bacterium M.luteus and the Gram-negative bacterium E.coli. The chain is Galensin from Kassina senegalensis (Senegal running frog).